The sequence spans 372 residues: Cell division protein FtsZ 1 (372 aa).

GTP is bound by residues 51–55, 138–140, Glu169, Arg173, and Asp216; these read GAGCN and GTG. The span at 350-360 shows a compositional bias: acidic residues; it reads PEEETPLETPE. Residues 350-372 are disordered; it reads PEEETPLETPEESPSIEISIPEL. Over residues 361–372 the composition is skewed to low complexity; sequence ESPSIEISIPEL.

It belongs to the FtsZ family. As to quaternary structure, homodimer. Polymerizes to form a dynamic ring structure in a strictly GTP-dependent manner. Interacts directly with several other division proteins.

The protein resides in the cytoplasm. In terms of biological role, essential cell division protein that forms a contractile ring structure (Z ring) at the future cell division site. The regulation of the ring assembly controls the timing and the location of cell division. One of the functions of the FtsZ ring is to recruit other cell division proteins to the septum to produce a new cell wall between the dividing cells. Binds GTP and shows GTPase activity. The protein is Cell division protein FtsZ 1 of Pyrococcus furiosus (strain ATCC 43587 / DSM 3638 / JCM 8422 / Vc1).